A 78-amino-acid chain; its full sequence is MKLTCMMFVAVLFLTASVFITADDSRNGIENLPRMRRHEMKNPKASKLNKRQCRVEGEICGMLFEAQCCDGWCFFVCM.

Residues 1-22 (MKLTCMMFVAVLFLTASVFITA) form the signal peptide. Positions 23-51 (DDSRNGIENLPRMRRHEMKNPKASKLNKR) are excised as a propeptide. Gln52 carries the pyrrolidone carboxylic acid modification. Intrachain disulfides connect Cys53–Cys69, Cys60–Cys73, and Cys68–Cys77.

This sequence belongs to the conotoxin O1 superfamily. In terms of tissue distribution, expressed by the venom duct.

The protein resides in the secreted. The protein is Conotoxin 1 of Conus imperialis (Imperial cone).